Consider the following 274-residue polypeptide: NAD-dependent protein deacetylase (274 aa).

One can recognise a Deacetylase sirtuin-type domain in the interval 1–274 (MDSRMSDLQA…CDEVLAEVVS (274 aa)). NAD(+) contacts are provided by residues 26–46 (GAGC…GQWK) and 104–107 (QNVD). His-122 functions as the Proton acceptor in the catalytic mechanism. The Zn(2+) site is built by Cys-130, Cys-133, Cys-181, and Cys-184. NAD(+) is bound by residues 221–223 (GSS), 247–249 (NLG), and Cys-265.

Belongs to the sirtuin family. Class II subfamily. Zn(2+) is required as a cofactor.

It localises to the cytoplasm. The enzyme catalyses N(6)-acetyl-L-lysyl-[protein] + NAD(+) + H2O = 2''-O-acetyl-ADP-D-ribose + nicotinamide + L-lysyl-[protein]. In terms of biological role, NAD-dependent protein deacetylase which modulates the activities of several enzymes which are inactive in their acetylated form. The chain is NAD-dependent protein deacetylase from Bordetella bronchiseptica (strain ATCC BAA-588 / NCTC 13252 / RB50) (Alcaligenes bronchisepticus).